Here is a 509-residue protein sequence, read N- to C-terminus: 5-hydroxytryptamine receptor (509 aa).

Residues 1–99 (MANFTFGDLA…YSHEHLVLTS (99 aa)) lie on the Extracellular side of the membrane. N-linked (GlcNAc...) asparagine glycans are attached at residues N3, N47, N58, N68, N72, and N78. Residues 100–122 (VILGLFVLCCIIGNCFVIAAVML) traverse the membrane as a helical segment. Residues 123–132 (ERSLHNVANY) are Cytoplasmic-facing. The chain crosses the membrane as a helical span at residues 133 to 154 (LILSLAVADLMVAVLVMPLSVV). Residues 155-169 (SEISKVWFLHSEVCD) are Extracellular-facing. C168 and C246 are joined by a disulfide. A helical membrane pass occupies residues 170–191 (MWISVDVLCCTASILHLVAIAM). Residues 192–210 (DRYWAVTSIDYIRRRSARR) lie on the Cytoplasmic side of the membrane. A helical transmembrane segment spans residues 211–233 (ILLMIMVVWIVALFISIPPLFGW). Residues 234–259 (RDPNNDPDKTGTCIISQDKGYTIFST) are Extracellular-facing. Residues 260–281 (VGAFYLPMLVMMIIYIRIWLVA) traverse the membrane as a helical segment. Residues 282–432 (RSRIRKDKFQ…LKRERKAART (151 aa)) lie on the Cytoplasmic side of the membrane. A disordered region spans residues 323–372 (SPDSTTEKKKRRAPFKSYGCSPRPERKKNRAKKLPENANGVNSNSSSSER). Residues 433–456 (LAIITGAFLICWLPFFIIALIGPF) traverse the membrane as a helical segment. Residues 457–465 (VDPEGIPPF) are Extracellular-facing. Residues 466-488 (ARSFVLWLGYFNSLLNPIIYTIF) traverse the membrane as a helical segment. Residues 489–509 (SPEFRSAFQKILFGKYRRGHR) lie on the Cytoplasmic side of the membrane.

The protein belongs to the G-protein coupled receptor 1 family.

Its subcellular location is the cell membrane. Its function is as follows. This is a receptor for 5-hydroxytryptamine (serotonin), a biogenic hormone that function as a neurotransmitter, a hormone, and a mitogen. This is 5-hydroxytryptamine receptor from Lymnaea stagnalis (Great pond snail).